The primary structure comprises 264 residues: S-adenosylmethionine decarboxylase proenzyme (264 aa).

S112 acts as the Schiff-base intermediate with substrate; via pyruvic acid in catalysis. S112 bears the Pyruvic acid (Ser); by autocatalysis mark. H117 acts as the Proton acceptor; for processing activity in catalysis. Residue C140 is the Proton donor; for catalytic activity of the active site.

It belongs to the prokaryotic AdoMetDC family. Type 2 subfamily. As to quaternary structure, heterooctamer of four alpha and four beta chains arranged as a tetramer of alpha/beta heterodimers. Requires pyruvate as cofactor. Is synthesized initially as an inactive proenzyme. Formation of the active enzyme involves a self-maturation process in which the active site pyruvoyl group is generated from an internal serine residue via an autocatalytic post-translational modification. Two non-identical subunits are generated from the proenzyme in this reaction, and the pyruvate is formed at the N-terminus of the alpha chain, which is derived from the carboxyl end of the proenzyme. The post-translation cleavage follows an unusual pathway, termed non-hydrolytic serinolysis, in which the side chain hydroxyl group of the serine supplies its oxygen atom to form the C-terminus of the beta chain, while the remainder of the serine residue undergoes an oxidative deamination to produce ammonia and the pyruvoyl group blocking the N-terminus of the alpha chain.

It carries out the reaction S-adenosyl-L-methionine + H(+) = S-adenosyl 3-(methylsulfanyl)propylamine + CO2. Its pathway is amine and polyamine biosynthesis; S-adenosylmethioninamine biosynthesis; S-adenosylmethioninamine from S-adenosyl-L-methionine: step 1/1. Its function is as follows. Catalyzes the decarboxylation of S-adenosylmethionine to S-adenosylmethioninamine (dcAdoMet), the propylamine donor required for the synthesis of the polyamines spermine and spermidine from the diamine putrescine. The chain is S-adenosylmethionine decarboxylase proenzyme from Escherichia coli O127:H6 (strain E2348/69 / EPEC).